The primary structure comprises 596 residues: Putative terpene synthase 2, chloroplastic (596 aa).

Residues 1 to 46 (MATLSMQVSTLSKQVKNLNTFGMGSASKLPMVARRVSTTRLRPICS) constitute a chloroplast transit peptide. Aspartate 349 and aspartate 353 together coordinate Mn(2+). Residues 349–353 (DDVYD) carry the DDXXD motif motif. Homodimerization stretches follow at residues 355-361 (YGTLDEL) and 427-464 (EAKW…FTLP). Positions 493 and 501 each coordinate Mn(2+).

Belongs to the terpene synthase family. In terms of assembly, homodimer. The cofactor is Mn(2+). Mg(2+) serves as cofactor.

The protein localises to the plastid. It localises to the chloroplast. The protein operates within secondary metabolite biosynthesis; terpenoid biosynthesis. Its function is as follows. Putative monoterpene synthase inactive on geranyl diphosphate (GPP). This is Putative terpene synthase 2, chloroplastic from Thymus vulgaris (Thyme).